The following is a 184-amino-acid chain: Large ribosomal subunit protein uL5 (184 aa).

The protein belongs to the universal ribosomal protein uL5 family. In terms of assembly, part of the 50S ribosomal subunit; part of the 5S rRNA/L5/L18/L25 subcomplex. Contacts the 5S rRNA and the P site tRNA. Forms a bridge to the 30S subunit in the 70S ribosome.

Its function is as follows. This is one of the proteins that bind and probably mediate the attachment of the 5S RNA into the large ribosomal subunit, where it forms part of the central protuberance. In the 70S ribosome it contacts protein S13 of the 30S subunit (bridge B1b), connecting the 2 subunits; this bridge is implicated in subunit movement. Contacts the P site tRNA; the 5S rRNA and some of its associated proteins might help stabilize positioning of ribosome-bound tRNAs. The protein is Large ribosomal subunit protein uL5 of Ureaplasma urealyticum serovar 10 (strain ATCC 33699 / Western).